A 427-amino-acid chain; its full sequence is L-threonine dehydratase biosynthetic IlvA (427 aa).

Lys63 bears the N6-(pyridoxal phosphate)lysine mark. Residues Asn90, 193–197 (GGGGC), and Ser319 each bind pyridoxal 5'-phosphate. The 75-residue stretch at 343–417 (HYFLVDFPQK…TEMHVETLQP (75 aa)) folds into the ACT-like domain.

Belongs to the serine/threonine dehydratase family. As to quaternary structure, homotetramer. Requires pyridoxal 5'-phosphate as cofactor.

The catalysed reaction is L-threonine = 2-oxobutanoate + NH4(+). The protein operates within amino-acid biosynthesis; L-isoleucine biosynthesis; 2-oxobutanoate from L-threonine: step 1/1. Catalyzes the anaerobic formation of alpha-ketobutyrate and ammonia from threonine in a two-step reaction. The first step involved a dehydration of threonine and a production of enamine intermediates (aminocrotonate), which tautomerizes to its imine form (iminobutyrate). Both intermediates are unstable and short-lived. The second step is the nonenzymatic hydrolysis of the enamine/imine intermediates to form 2-ketobutyrate and free ammonia. In the low water environment of the cell, the second step is accelerated by RidA. The chain is L-threonine dehydratase biosynthetic IlvA (ilvA) from Mycobacterium leprae (strain TN).